The primary structure comprises 231 residues: 5'-methylthioadenosine/S-adenosylhomocysteine nucleosidase (231 aa).

Catalysis depends on Glu-12, which acts as the Proton acceptor. Residues Gly-78, Met-153, and 174–175 (ME) contribute to the substrate site. The active-site Proton donor is the Asp-198.

Belongs to the PNP/UDP phosphorylase family. MtnN subfamily.

The catalysed reaction is S-adenosyl-L-homocysteine + H2O = S-(5-deoxy-D-ribos-5-yl)-L-homocysteine + adenine. It catalyses the reaction S-methyl-5'-thioadenosine + H2O = 5-(methylsulfanyl)-D-ribose + adenine. The enzyme catalyses 5'-deoxyadenosine + H2O = 5-deoxy-D-ribose + adenine. Its pathway is amino-acid biosynthesis; L-methionine biosynthesis via salvage pathway; S-methyl-5-thio-alpha-D-ribose 1-phosphate from S-methyl-5'-thioadenosine (hydrolase route): step 1/2. In terms of biological role, catalyzes the irreversible cleavage of the glycosidic bond in both 5'-methylthioadenosine (MTA) and S-adenosylhomocysteine (SAH/AdoHcy) to adenine and the corresponding thioribose, 5'-methylthioribose and S-ribosylhomocysteine, respectively. Also cleaves 5'-deoxyadenosine, a toxic by-product of radical S-adenosylmethionine (SAM) enzymes, into 5-deoxyribose and adenine. The polypeptide is 5'-methylthioadenosine/S-adenosylhomocysteine nucleosidase (Bacillus pumilus (strain SAFR-032)).